The chain runs to 284 residues: Ribosomal RNA small subunit methyltransferase A (284 aa).

Positions 26, 28, 53, 74, 97, and 127 each coordinate S-adenosyl-L-methionine.

The protein belongs to the class I-like SAM-binding methyltransferase superfamily. rRNA adenine N(6)-methyltransferase family. RsmA subfamily.

It localises to the cytoplasm. It carries out the reaction adenosine(1518)/adenosine(1519) in 16S rRNA + 4 S-adenosyl-L-methionine = N(6)-dimethyladenosine(1518)/N(6)-dimethyladenosine(1519) in 16S rRNA + 4 S-adenosyl-L-homocysteine + 4 H(+). Its function is as follows. Specifically dimethylates two adjacent adenosines (A1518 and A1519) in the loop of a conserved hairpin near the 3'-end of 16S rRNA in the 30S particle. May play a critical role in biogenesis of 30S subunits. This Anaeromyxobacter dehalogenans (strain 2CP-C) protein is Ribosomal RNA small subunit methyltransferase A.